The chain runs to 536 residues: Phosphoenolpyruvate carboxykinase (ATP) (536 aa).

Residues Arg61, Tyr195, and Lys201 each coordinate substrate. ATP contacts are provided by residues Lys201, His220, and 236–244; that span reads GLSGTGKTT. Lys201 and His220 together coordinate Mn(2+). Asp257 lines the Mn(2+) pocket. ATP-binding residues include Glu285, Arg322, and Thr447. Arg322 contributes to the substrate binding site.

Belongs to the phosphoenolpyruvate carboxykinase (ATP) family. Mn(2+) serves as cofactor.

It is found in the cytoplasm. The catalysed reaction is oxaloacetate + ATP = phosphoenolpyruvate + ADP + CO2. The protein operates within carbohydrate biosynthesis; gluconeogenesis. Functionally, involved in the gluconeogenesis. Catalyzes the conversion of oxaloacetate (OAA) to phosphoenolpyruvate (PEP) through direct phosphoryl transfer between the nucleoside triphosphate and OAA. This Sinorhizobium fredii (strain NBRC 101917 / NGR234) protein is Phosphoenolpyruvate carboxykinase (ATP).